The following is a 612-amino-acid chain: UvrABC system protein C (612 aa).

In terms of domain architecture, GIY-YIG spans 15–93 (HLPGVYRMYD…IKQHQPKYNV (79 aa)). Positions 203 to 238 (SQVIDYLMQKMEIAASELDFETAARFRDQIQSVRAV) constitute a UVR domain.

This sequence belongs to the UvrC family. In terms of assembly, interacts with UvrB in an incision complex.

It is found in the cytoplasm. The UvrABC repair system catalyzes the recognition and processing of DNA lesions. UvrC both incises the 5' and 3' sides of the lesion. The N-terminal half is responsible for the 3' incision and the C-terminal half is responsible for the 5' incision. The sequence is that of UvrABC system protein C from Haemophilus ducreyi (strain 35000HP / ATCC 700724).